Reading from the N-terminus, the 131-residue chain is Bacteriohemerythrin (131 aa).

Fe cation contacts are provided by H22, H58, E62, H77, H81, H117, and D122.

It belongs to the hemerythrin family. As to quaternary structure, monomer.

In terms of biological role, oxygen-binding protein. May be involved in a storage mechanism or for delivery to oxygen-requiring enzymes. The oxygen-binding site contains two iron atoms. This chain is Bacteriohemerythrin, found in Methylococcus capsulatus (strain ATCC 33009 / NCIMB 11132 / Bath).